The primary structure comprises 391 residues: Sister chromatid cohesion protein DCC1 (391 aa).

Belongs to the DCC1 family. Component of the ctf18-RFC complex which consists of ctf18, ctf8, dscc1 and the RFC complex.

Its subcellular location is the nucleus. In terms of biological role, loads pcna onto primed templates regulating velocity, spacing and restart activity of replication forks. May couple DNA replication to sister chromatid cohesion. The sequence is that of Sister chromatid cohesion protein DCC1 (dscc1) from Danio rerio (Zebrafish).